The primary structure comprises 332 residues: 1-acyl-sn-glycerol-3-phosphate acyltransferase CHLREDRAFT_174358 (332 aa).

Residues 96–116 (FLLSLPLFVTMMVMAPLVLAF) form a helical membrane-spanning segment. Residues 163-168 (HQSFLD) carry the HXXXXD motif motif. Residues 185–205 (TSNFLIPIIGWSMFLTGHVMI) form a helical membrane-spanning segment. An EGTR motif motif is present at residues 235-238 (EGTR).

The protein belongs to the 1-acyl-sn-glycerol-3-phosphate acyltransferase family.

Its subcellular location is the membrane. The enzyme catalyses a 1-acyl-sn-glycero-3-phosphate + an acyl-CoA = a 1,2-diacyl-sn-glycero-3-phosphate + CoA. Its pathway is phospholipid metabolism; CDP-diacylglycerol biosynthesis; CDP-diacylglycerol from sn-glycerol 3-phosphate: step 2/3. Its function is as follows. Converts lysophosphatidic acid (LPA) into phosphatidic acid by incorporating an acyl moiety at the sn-2 position of the glycerol backbone. This chain is 1-acyl-sn-glycerol-3-phosphate acyltransferase CHLREDRAFT_174358, found in Chlamydomonas reinhardtii (Chlamydomonas smithii).